The chain runs to 273 residues: MSNPFDLLGNDVEDADVVVLPPKEIVKSNTSSKKADVPPPSADPSKARKNRPRPSGNEGAIRDKTAGRRNNRSKDVTDSATTKKSNTRRATDRHSRTGKTDTKKKVNQGWGDDKKELSAEKEAQADAAAEIAEDAAEAEDAGKPKTAQLSLQDYLNQQANNQFNKVPEAKKVELDAERIETAEKEAYVPATKVKNVKSKQLKTKEYLEFDATFVESNTRKNFGDRNNNSRNNFNNRRGGRGARKGNNTANATNSANTVQKNRNIDVSNLPSLA.

The interval 1 to 153 (MSNPFDLLGN…PKTAQLSLQD (153 aa)) is disordered. Ser2 carries the post-translational modification N-acetylserine. Phosphoserine; by MTOR occurs at positions 32, 41, and 45. Residue Lys46 forms a Glycyl lysine isopeptide (Lys-Gly) (interchain with G-Cter in ubiquitin) linkage. Residues Ser55 and Ser73 each carry the phosphoserine; by MTOR modification. Ser55 carries the phosphoserine modification. 3 stretches are compositionally biased toward basic and acidic residues: residues 60–77 (AIRD…KDVT), 89–104 (RATD…DTKK), and 111–124 (GDDK…KEAQ). A Phosphoserine modification is found at Ser118. Glycyl lysine isopeptide (Lys-Gly) (interchain with G-Cter in ubiquitin) cross-links involve residues Lys121 and Lys171. Thr181 is subject to Phosphothreonine; by MTOR. Lys184 participates in a covalent cross-link: Glycyl lysine isopeptide (Lys-Gly) (interchain with G-Cter in ubiquitin). At Thr218 the chain carries Phosphothreonine; by MTOR. The interval 219 to 273 (RKNFGDRNNNSRNNFNNRRGGRGARKGNNTANATNSANTVQKNRNIDVSNLPSLA) is disordered. Low complexity-rich tracts occupy residues 224-236 (DRNN…FNNR) and 244-257 (KGNN…SANT). Ser229 bears the Phosphoserine mark. Residues 258 to 273 (VQKNRNIDVSNLPSLA) show a composition bias toward polar residues.

Belongs to the SERBP1-HABP4 family. In terms of assembly, associates with mature 80S ribosomes. Binds to the head domain of the 40S ribosomal subunit and prevents mRNA binding by inserting its alpha-helix domain towards the mRNA entry tunnel at the decoding site, where it blocks the binding of tRNA and mRNA at the A- and P-sites. Interacts with EFT1; interaction sequesters EFT1 at the A-site of the ribosome, thereby blocking the interaction sites of the mRNA-tRNA complex, promoting ribosome stabilization and hibernation. Interacts with CDC13. Associates with the telomere-proximal Y' element. In terms of processing, phosphorylation by TORC1 upon nutrient replenishment inhibits STM1 and causes its release from dormant ribosomes.

The protein resides in the cytoplasm. It is found in the nucleus. It localises to the perinuclear region. Its function is as follows. Ribosome preservation factor that protect a small pool of nontranslating, vacant ribosomes in cells under nutrient starvation conditions. Under nutrient-limiting conditions, cells reduce ribosome biogenesis and degrade ribosomes via autophagy (ribophagy) or proteasomal degradation. To avoid excessive degradation during starvation, STM1 binds to and protects 80S ribosomes from proteasomal degradation. Under nutrient-sufficient conditions, TORC1 phosphorylates and inhibits STM1 to prevent formation of dormant 80S ribosomes. Acts as an inhibitor of mRNA translation by promoting ribosome hibernation: clamps the two ribosomal subunits, thereby preventing their dissociation, and inhibits translation by excluding mRNA-binding. Acts via its association with eEF2 (EFT1), promoting ribosome stabilization and storage in an inactive state. May also repress translation by preventing association of eEF3 (YEF3 and HEF3) with ribosomes. Binds specifically G4 quadruplex (these are four-stranded right-handed helices, stabilized by guanine base quartets) and purine motif triplex (characterized by a third, antiparallel purine-rich DNA strand located within the major groove of a homopurine stretch of duplex DNA) nucleic acid structures. These structures may be present at telomeres or in rRNAs. Acts with CDC13 to control telomere length homeostasis. Involved in the control of the apoptosis-like cell death. The protein is Suppressor protein STM1 of Saccharomyces cerevisiae (strain ATCC 204508 / S288c) (Baker's yeast).